A 199-amino-acid polypeptide reads, in one-letter code: Cytochrome c-type cyt cy (199 aa).

Residues 7 to 27 form a helical membrane-spanning segment; sequence ITKIGVTLFAVALFYGFIYML. Over residues 69–80 the composition is skewed to low complexity; it reads AAETAEAAAPAE. The tract at residues 69 to 93 is disordered; the sequence is AAETAEAAAPAEPAAPPPPAYVEVD. Cys-112, Cys-115, His-116, and Met-148 together coordinate heme c.

Binds 1 heme c group covalently per subunit.

The protein resides in the cell membrane. Functionally, electron transfer pathways that operates during photosynthesis. The chain is Cytochrome c-type cyt cy (cycY) from Rhodobacter capsulatus (strain ATCC BAA-309 / NBRC 16581 / SB1003).